Here is a 478-residue protein sequence, read N- to C-terminus: 9-divinyl ether synthase (478 aa).

Cys-431 provides a ligand contact to heme.

Belongs to the cytochrome P450 family. 9-divinyl ether synthase subfamily.

It catalyses the reaction (9S)-hydroperoxy-(10E,12Z)-octadecadienoate = colneleate + H2O. Functionally, involved in the biosynthesis of the anti-fungal toxins colneleic acid and colnelenic acid. The protein is 9-divinyl ether synthase (DES) of Capsicum annuum (Capsicum pepper).